A 214-amino-acid chain; its full sequence is Probable chorismate pyruvate-lyase (214 aa).

3 residues coordinate substrate: Arg74, Leu112, and Glu173. A disordered region spans residues Ala183–Ser214. The span at Arg197 to Ser214 shows a compositional bias: basic and acidic residues.

It belongs to the UbiC family.

It is found in the cytoplasm. It catalyses the reaction chorismate = 4-hydroxybenzoate + pyruvate. The protein operates within cofactor biosynthesis; ubiquinone biosynthesis. Removes the pyruvyl group from chorismate, with concomitant aromatization of the ring, to provide 4-hydroxybenzoate (4HB) for the ubiquinone pathway. The protein is Probable chorismate pyruvate-lyase of Cupriavidus metallidurans (strain ATCC 43123 / DSM 2839 / NBRC 102507 / CH34) (Ralstonia metallidurans).